A 380-amino-acid polypeptide reads, in one-letter code: Cytochrome b (380 aa).

Transmembrane regions (helical) follow at residues 33–53 (FGSL…FLAM), 77–98 (WLIR…FIHV), 113–133 (WNIG…GYVL), and 178–198 (FFAF…VHLL). Residues His-83 and His-97 each contribute to the heme b site. Heme b is bound by residues His-182 and His-196. A ubiquinone is bound at residue His-201. A run of 4 helical transmembrane segments spans residues 226–246 (IKDL…VLFF), 288–308 (LGGV…PLLN), 320–340 (LTQF…WIGG), and 347–367 (FTTI…VLMP).

This sequence belongs to the cytochrome b family. In terms of assembly, the cytochrome bc1 complex contains 11 subunits: 3 respiratory subunits (MT-CYB, CYC1 and UQCRFS1), 2 core proteins (UQCRC1 and UQCRC2) and 6 low-molecular weight proteins (UQCRH/QCR6, UQCRB/QCR7, UQCRQ/QCR8, UQCR10/QCR9, UQCR11/QCR10 and a cleavage product of UQCRFS1). This cytochrome bc1 complex then forms a dimer. Heme b serves as cofactor.

It localises to the mitochondrion inner membrane. Functionally, component of the ubiquinol-cytochrome c reductase complex (complex III or cytochrome b-c1 complex) that is part of the mitochondrial respiratory chain. The b-c1 complex mediates electron transfer from ubiquinol to cytochrome c. Contributes to the generation of a proton gradient across the mitochondrial membrane that is then used for ATP synthesis. The polypeptide is Cytochrome b (MT-CYB) (Thomasomys notatus (Distinguished oldfield mouse)).